The following is a 257-amino-acid chain: Transmembrane protein 101 (257 aa).

8 helical membrane passes run 21-40 (VLLTRCPFWGCFSQLMLYAE), 52-72 (VPYLYFDMGAAVLCASFMSFG), 77-97 (WFALGAALQLAISTYAAYIGG), 110-130 (YSRTVAIIGGFLVLASGAGEL), 139-159 (SLQSTGQVFLGIYLICVAYSL), 182-202 (LFFVLYGVLALAFLSGYYVTL), 206-226 (ILAVLLPPVMLLIDGNVAYWH), and 233-253 (FWNQMKLLGESVGIFGTAVIL).

It is found in the membrane. Functionally, may activate NF-kappa-B signaling pathways. This Pongo abelii (Sumatran orangutan) protein is Transmembrane protein 101 (TMEM101).